A 486-amino-acid chain; its full sequence is Ribulose bisphosphate carboxylase large chain (486 aa).

2 residues coordinate substrate: Asn-125 and Thr-175. Catalysis depends on Lys-177, which acts as the Proton acceptor. Position 179 (Lys-179) interacts with substrate. Residues Lys-203, Asp-205, and Glu-206 each contribute to the Mg(2+) site. Residue Lys-203 is modified to N6-carboxylysine. The Proton acceptor role is filled by His-295. Substrate contacts are provided by Arg-296, His-328, and Ser-380.

Belongs to the RuBisCO large chain family. Type I subfamily. As to quaternary structure, heterohexadecamer of 8 large chains and 8 small chains. The cofactor is Mg(2+).

It carries out the reaction 2 (2R)-3-phosphoglycerate + 2 H(+) = D-ribulose 1,5-bisphosphate + CO2 + H2O. The catalysed reaction is D-ribulose 1,5-bisphosphate + O2 = 2-phosphoglycolate + (2R)-3-phosphoglycerate + 2 H(+). In terms of biological role, ruBisCO catalyzes two reactions: the carboxylation of D-ribulose 1,5-bisphosphate, the primary event in carbon dioxide fixation, as well as the oxidative fragmentation of the pentose substrate. Both reactions occur simultaneously and in competition at the same active site. The protein is Ribulose bisphosphate carboxylase large chain of Cereibacter sphaeroides (Rhodobacter sphaeroides).